We begin with the raw amino-acid sequence, 48 residues long: Large ribosomal subunit protein bL32 (48 aa).

Residues 1–20 (MAVPKRRVSKTRAAKRRTHY) show a composition bias toward basic residues. The interval 1–48 (MAVPKRRVSKTRAAKRRTHYKVSLPMPIKDKDGSYKMPHRANPTTKEY) is disordered.

This sequence belongs to the bacterial ribosomal protein bL32 family.

The chain is Large ribosomal subunit protein bL32 (rpmF) from Campylobacter jejuni subsp. jejuni serotype O:2 (strain ATCC 700819 / NCTC 11168).